The following is a 102-amino-acid chain: uncharacterized protein (102 aa).

This is an uncharacterized protein from Saccharomyces cerevisiae (strain ATCC 204508 / S288c) (Baker's yeast).